The following is a 441-amino-acid chain: GTPase Der (441 aa).

EngA-type G domains follow at residues 4–168 (PVVA…PEDI) and 177–352 (IRIA…EQNS). GTP-binding positions include 10-17 (GRPNVGKS), 57-61 (DTGGI), 121-124 (NKVE), 183-190 (GRPNVGKS), 230-234 (DTAGM), and 295-298 (NKWD). Residues 353-437 (TRVATATLNT…PIRMIVRQKD (85 aa)) enclose the KH-like domain.

The protein belongs to the TRAFAC class TrmE-Era-EngA-EngB-Septin-like GTPase superfamily. EngA (Der) GTPase family. As to quaternary structure, associates with the 50S ribosomal subunit.

In terms of biological role, GTPase that plays an essential role in the late steps of ribosome biogenesis. This chain is GTPase Der, found in Desulfitobacterium hafniense (strain Y51).